Here is an 89-residue protein sequence, read N- to C-terminus: Large ribosomal subunit protein eL34 (89 aa).

The tract at residues 1–22 (MPAPRYKSGSSKKVYRKAPGNS) is disordered.

This sequence belongs to the eukaryotic ribosomal protein eL34 family.

The protein is Large ribosomal subunit protein eL34 of Methanococcus maripaludis (strain C7 / ATCC BAA-1331).